Here is a 177-residue protein sequence, read N- to C-terminus: Ribosome maturation factor RimM (177 aa).

Residues 92-166 (EDTFYHADLM…RIVVVPDTNP (75 aa)) enclose the PRC barrel domain.

It belongs to the RimM family. Binds ribosomal protein uS19.

Its subcellular location is the cytoplasm. An accessory protein needed during the final step in the assembly of 30S ribosomal subunit, possibly for assembly of the head region. Essential for efficient processing of 16S rRNA. May be needed both before and after RbfA during the maturation of 16S rRNA. It has affinity for free ribosomal 30S subunits but not for 70S ribosomes. In Azorhizobium caulinodans (strain ATCC 43989 / DSM 5975 / JCM 20966 / LMG 6465 / NBRC 14845 / NCIMB 13405 / ORS 571), this protein is Ribosome maturation factor RimM.